The following is a 72-amino-acid chain: Small ribosomal subunit protein bS20 (72 aa).

The protein belongs to the bacterial ribosomal protein bS20 family.

Its function is as follows. Binds directly to 16S ribosomal RNA. This is Small ribosomal subunit protein bS20 (rpsT) from Aeromonas hydrophila.